Consider the following 728-residue polypeptide: Rho-related BTB domain-containing protein 2 (728 aa).

Residues 1–210 (MDSDMDYERP…DNAIRAALIS (210 aa)) form a rho-like region. GTP contacts are provided by residues 21–28 (GDNAVGKT), 84–88 (DTFGD), and 140–143 (CQLD). BTB domains lie at 266 to 333 (ADVI…HHHH) and 500 to 567 (SDVT…TSSP). Positions 304 to 313 (ELGGPSGSGG) are enriched in gly residues. The disordered stretch occupies residues 304–333 (ELGGPSGSGGPRPEDHRSHPEQHHHHHHHH). Residues 315 to 324 (RPEDHRSHPE) show a composition bias toward basic and acidic residues. The segment at 703-728 (FWNSPSSPSSSAAGSASPSSSSSAVV) is disordered. Low complexity predominate over residues 706–728 (SPSSPSSSAAGSASPSSSSSAVV).

It belongs to the small GTPase superfamily. Rho family. In terms of assembly, interacts with HSP90AA1 and HSP90AB1. Forms a complex with CUL3 and RBX1. Interacts (via BTB 1 domain) with CUL3. Interacts with MSI2. Autoubiquitinated by RHOBTB2-CUL3-RBX1 ubiquitin ligase complex. In terms of tissue distribution, expressed in most tissues, with highest expression in brain.

Regulator of cell proliferation and apoptosis. It likely functions as a substrate-adapter that recruits key substrates, e.g. MSI2, to CUL3-based ubiquitin ligase complexes for degradation. Required for MSI2 ubiquitination and degradation. The polypeptide is Rho-related BTB domain-containing protein 2 (Rhobtb2) (Mus musculus (Mouse)).